We begin with the raw amino-acid sequence, 275 residues long: 3-methyl-2-oxobutanoate hydroxymethyltransferase (275 aa).

The Mg(2+) site is built by Asp-49 and Asp-88. 3-methyl-2-oxobutanoate is bound by residues 49 to 50, Asp-88, and Lys-118; that span reads DS. Glu-120 is a binding site for Mg(2+). Residue Glu-187 is the Proton acceptor of the active site.

It belongs to the PanB family. In terms of assembly, homodecamer; pentamer of dimers. Mg(2+) is required as a cofactor.

The protein localises to the cytoplasm. It carries out the reaction 3-methyl-2-oxobutanoate + (6R)-5,10-methylene-5,6,7,8-tetrahydrofolate + H2O = 2-dehydropantoate + (6S)-5,6,7,8-tetrahydrofolate. Its pathway is cofactor biosynthesis; (R)-pantothenate biosynthesis; (R)-pantoate from 3-methyl-2-oxobutanoate: step 1/2. In terms of biological role, catalyzes the reversible reaction in which hydroxymethyl group from 5,10-methylenetetrahydrofolate is transferred onto alpha-ketoisovalerate to form ketopantoate. In Brucella melitensis biotype 1 (strain ATCC 23456 / CCUG 17765 / NCTC 10094 / 16M), this protein is 3-methyl-2-oxobutanoate hydroxymethyltransferase.